Reading from the N-terminus, the 115-residue chain is Large ribosomal subunit protein bL19 (115 aa).

Belongs to the bacterial ribosomal protein bL19 family.

This protein is located at the 30S-50S ribosomal subunit interface and may play a role in the structure and function of the aminoacyl-tRNA binding site. The polypeptide is Large ribosomal subunit protein bL19 (Leifsonia xyli subsp. xyli (strain CTCB07)).